Here is a 403-residue protein sequence, read N- to C-terminus: S-adenosylmethionine synthase (403 aa).

His-15 provides a ligand contact to ATP. Residue Asp-17 coordinates Mg(2+). K(+) is bound at residue Glu-43. L-methionine-binding residues include Glu-56 and Gln-99. The tract at residues 99 to 109 (QSPHIAQGVDR) is flexible loop. ATP-binding positions include 166–168 (DAK), 232–233 (KF), Asp-241, 247–248 (RK), Ala-264, and Lys-268. Asp-241 is an L-methionine binding site. Lys-272 contributes to the L-methionine binding site.

This sequence belongs to the AdoMet synthase family. Homotetramer; dimer of dimers. It depends on Mg(2+) as a cofactor. K(+) is required as a cofactor.

The protein resides in the cytoplasm. It carries out the reaction L-methionine + ATP + H2O = S-adenosyl-L-methionine + phosphate + diphosphate. The protein operates within amino-acid biosynthesis; S-adenosyl-L-methionine biosynthesis; S-adenosyl-L-methionine from L-methionine: step 1/1. Catalyzes the formation of S-adenosylmethionine (AdoMet) from methionine and ATP. The overall synthetic reaction is composed of two sequential steps, AdoMet formation and the subsequent tripolyphosphate hydrolysis which occurs prior to release of AdoMet from the enzyme. This chain is S-adenosylmethionine synthase, found in Stenotrophomonas maltophilia (strain R551-3).